Reading from the N-terminus, the 280-residue chain is Dolichyl-diphosphooligosaccharide--protein glycosyltransferase subunit 2 (280 aa).

Positions 1-16 (MKLLLVLLTIASVALA) are cleaved as a signal peptide. Topologically, residues 17–187 (AVDDVAVNNF…FRQPEKRPSA (171 aa)) are lumenal. A helical membrane pass occupies residues 188–208 (LISDLFTIICLSPLLILVVLW). The Cytoplasmic portion of the chain corresponds to 209 to 222 (SQVGINFQNAPASP). Residues 223–243 (WVPIFHVGLIGIFGIYFMFWV) traverse the membrane as a helical segment. Position 244 (glutamine 244) is a topological domain, lumenal. A helical transmembrane segment spans residues 245 to 265 (FDMFVTLKYLAVLGFLTFVAG). The Cytoplasmic segment spans residues 266-280 (NRVLRAISESKQKSE).

It belongs to the SWP1 family. As to quaternary structure, component of the oligosaccharyltransferase (OST) complex.

It localises to the endoplasmic reticulum membrane. Its pathway is protein modification; protein glycosylation. Subunit of the oligosaccharyl transferase (OST) complex that catalyzes the initial transfer of a defined glycan (Glc(3)Man(9)GlcNAc(2) in eukaryotes) from the lipid carrier dolichol-pyrophosphate to an asparagine residue within an Asn-X-Ser/Thr consensus motif in nascent polypeptide chains, the first step in protein N-glycosylation. N-glycosylation occurs cotranslationally and the complex associates with the Sec61 complex at the channel-forming translocon complex that mediates protein translocation across the endoplasmic reticulum (ER). All subunits are required for a maximal enzyme activity. This is Dolichyl-diphosphooligosaccharide--protein glycosyltransferase subunit 2 from Caenorhabditis elegans.